A 51-amino-acid chain; its full sequence is Large ribosomal subunit protein eL39 (51 aa).

It belongs to the eukaryotic ribosomal protein eL39 family.

This is Large ribosomal subunit protein eL39 from Thermococcus onnurineus (strain NA1).